A 431-amino-acid polypeptide reads, in one-letter code: Alpha-gurjunene synthase (431 aa).

Residues aspartate 126 and aspartate 130 each contribute to the Mg(2+) site. Arginine 267 provides a ligand contact to (2E,6E)-farnesyl diphosphate. Mg(2+)-binding residues include asparagine 321 and serine 325. Residue lysine 328 coordinates (2E,6E)-farnesyl diphosphate. Glutamate 329 contacts Mg(2+). 412–413 (RY) is a binding site for (2E,6E)-farnesyl diphosphate.

Belongs to the terpene synthase family. It depends on Mg(2+) as a cofactor.

It catalyses the reaction (2E,6E)-farnesyl diphosphate = (-)-alpha-gurjunene + diphosphate. It carries out the reaction (2E,6E)-farnesyl diphosphate + H2O = 5-hydroxy-alpha-gurjunene + diphosphate. The protein operates within secondary metabolite biosynthesis; terpenoid biosynthesis. Catalyzes the conversion of (2E,6E)-farnesyl diphosphate (FPP) into the sesquiterpene alcohols (-)-alpha-gurjunene and 5-hydroxy-alpha-gurjunene. Other unidentified sesquiterpene alcohols found to be catalyzed by MTPSL4 may arise from carbocation reaction intermediates along the catalytic cascade to gurjunene being quenched by a water molecule, yielding formation of the alcohols. The chain is Alpha-gurjunene synthase from Marchantia polymorpha (Common liverwort).